Reading from the N-terminus, the 885-residue chain is Sensor histidine kinase KdpD (885 aa).

Helical transmembrane passes span 384 to 404 (AIDMLKMILIQIICVMMGLWI), 415 to 435 (IILMIFLIGIILLSIWTRSFI), 436 to 456 (IGFLAAIINVFVFNYFFTEPR), and 464 to 484 (FDYPITFIVSILTSILTSALL). The 221-residue stretch at 660 to 880 (SISHDIRTPL…IFYFNIYTDF (221 aa)) folds into the Histidine kinase domain. Histidine 663 is modified (phosphohistidine; by autocatalysis).

It localises to the membrane. The catalysed reaction is ATP + protein L-histidine = ADP + protein N-phospho-L-histidine.. Its activity is regulated as follows. Cyclic di-AMP is a negative regulator of the Kdp system. Its function is as follows. Member of the two-component regulatory system KdpD/KdpE that regulates the transcription of a series of virulence factors through sensing external K(+) concentrations. Also regulates capsular polysaccharide production. May function as a membrane-associated protein kinase that phosphorylates KdpE in response to environmental signals. In turn, KpdE functions as a transcriptional regulator by direct binding to promoter regions of target genes including spa, hla, aur and geh. This Staphylococcus aureus (strain NCTC 8325 / PS 47) protein is Sensor histidine kinase KdpD.